A 281-amino-acid polypeptide reads, in one-letter code: MTVPRVRSYVPGLDEILFGGIPERSVVLLSGGPGTGKSILGKQFLYNGLKRGDAGVFVALEEHPVAVRRSFRHFGWDIAQYEREGKFAIVDAFTGGVGTAAQRERYIVKQVDDVHELSDVLRQAIRDTGARRVVIDSVSTLYLTKPAVARGTIMTLKRVIAGLGCTAFFVSQVSVGERGFGGPGVEHAVDGIIRLDLDEFDGRLYRSIIVWKMRDTKHSMVRHPMEIKDGGIEIMWDKYIKITGSSVRIEPLPKEEAEAMRKAVEDVEKQPAPKKIEIEEE.

Positions Pro4–Arg248 constitute a KaiC domain. Gly31–Ser38 is a binding site for ATP.

The protein belongs to the UPF0273 family.

The polypeptide is UPF0273 protein PAE3143 (Pyrobaculum aerophilum (strain ATCC 51768 / DSM 7523 / JCM 9630 / CIP 104966 / NBRC 100827 / IM2)).